We begin with the raw amino-acid sequence, 64 residues long: MIKSIILPEENTKITVGKPINDESNTKVIAIYDYREEPEEAFWVHLSNGNDLFVDNHEVIVEYE.

The chain is SPbeta prophage-derived uncharacterized protein YoqI (yoqI) from Bacillus subtilis (strain 168).